The chain runs to 203 residues: ADP-ribosylation factor-like protein 6-interacting protein 1 (203 aa).

Residues 1 to 41 lie on the Cytoplasmic side of the membrane; sequence MAEGDNRSSNLLAAETASLEEQLQGWGEVMLMADKVLRWER. A helical membrane pass occupies residues 42 to 62; that stretch reads AWFPPAIMGVVSLVFLIIYYL. Over 63-65 the chain is Lumenal; the sequence is DPS. A helical membrane pass occupies residues 66-86; that stretch reads VLSGVSCFVMFLCLADYLVPI. Residues 87–133 are Cytoplasmic-facing; it reads LAPRIFGSNKWTTEQQQRFHEICSNLVKTRRRAVGWWKRLFTLKEEK. Residues 134–175 form a helical membrane-spanning segment; sequence PKMYFMTMIVSLAAVAWVGQQVHNLLLTYLIVTSLLLLPGLN. Over 176-203 the chain is Lumenal; it reads QHGIISKYIGMAKREINKLLKQKEKKNE.

The protein belongs to the ARL6ip family. In terms of assembly, homooligomer. Heterodimer with ARL6IP5. Interacts with ATL1, TMEM33 and ARL6.

The protein localises to the endomembrane system. The protein resides in the endoplasmic reticulum membrane. It localises to the endoplasmic reticulum. Its function is as follows. Positively regulates SLC1A1/EAAC1-mediated glutamate transport by increasing its affinity for glutamate in a PKC activity-dependent manner. Promotes the catalytic efficiency of SLC1A1/EAAC1 probably by reducing its interaction with ARL6IP5, a negative regulator of SLC1A1/EAAC1-mediated glutamate transport. Plays a role in the formation and stabilization of endoplasmic reticulum tubules. Negatively regulates apoptosis, possibly by modulating the activity of caspase-9 (CASP9). Inhibits cleavage of CASP9-dependent substrates and downstream markers of apoptosis but not CASP9 itself. May be involved in protein transport, membrane trafficking, or cell signaling during hematopoietic maturation. The protein is ADP-ribosylation factor-like protein 6-interacting protein 1 (ARL6IP1) of Pongo abelii (Sumatran orangutan).